Here is a 176-residue protein sequence, read N- to C-terminus: Interleukin-7 (176 aa).

The first 25 residues, 1 to 25 (MFHVSFRYIFGIPPLILVLLPVASS), serve as a signal peptide directing secretion. 3 cysteine pairs are disulfide-bonded: C27/C165, C58/C153, and C71/C116. N-linked (GlcNAc...) asparagine glycosylation is found at N94, N115, and N140. Residues 118–143 (SKGKGRKPPSLSEAQPTKNLEENKSS) are disordered.

This sequence belongs to the IL-7/IL-9 family. As to quaternary structure, interacts with IL7R and CSF2RG.

The protein localises to the secreted. Its function is as follows. Hematopoietic cytokine that plays an essential role in the development, expansion, and survival of naive and memory T-cells and B-cells thereby regulating the number of mature lymphocytes and maintaining lymphoid homeostasis. Mechanistically, exerts its biological effects through a receptor composed of IL7RA subunit and the cytokine receptor common subunit gamma/CSF2RG. Binding to the receptor leads to activation of various kinases including JAK1 or JAK3 depending on the cell type and subsequently propagation of signals through activation of several downstream signaling pathways including the PI3K/Akt/mTOR or the JAK-STAT5. The sequence is that of Interleukin-7 (IL7) from Bos taurus (Bovine).